The chain runs to 192 residues: Transmembrane protein 276 (192 aa).

The first 32 residues, 1 to 32, serve as a signal peptide directing secretion; the sequence is MAPKPGAEWSTALSHLVLGVVSLHAAVSTAEA. 4 consecutive transmembrane segments (helical) span residues 35 to 55, 63 to 83, 89 to 109, and 114 to 134; these read GAAAGFLLQVLAATTTLAPGL, AGAWVATVIGLPLLAFDFHWV, SANLLLGGGMVLAVAGGHLGP, and VAGQAMLLVVAVTILIVAVFT.

The protein resides in the membrane. The protein is Transmembrane protein 276 of Homo sapiens (Human).